A 706-amino-acid polypeptide reads, in one-letter code: Fatty acid oxidation complex subunit alpha (706 aa).

The enoyl-CoA hydratase stretch occupies residues 1 to 188 (MEKTFNLTRR…KMGLVNDVVP (188 aa)). A 3-hydroxyacyl-CoA dehydrogenase region spans residues 308–706 (RKVKKAVILG…TMAQENAHFF (399 aa)).

In the N-terminal section; belongs to the enoyl-CoA hydratase/isomerase family. It in the central section; belongs to the 3-hydroxyacyl-CoA dehydrogenase family. As to quaternary structure, heterotetramer of two alpha chains (FadJ) and two beta chains (FadI).

Its subcellular location is the cytoplasm. The enzyme catalyses a (3S)-3-hydroxyacyl-CoA = a (2E)-enoyl-CoA + H2O. It catalyses the reaction a 4-saturated-(3S)-3-hydroxyacyl-CoA = a (3E)-enoyl-CoA + H2O. It carries out the reaction a (3S)-3-hydroxyacyl-CoA + NAD(+) = a 3-oxoacyl-CoA + NADH + H(+). The catalysed reaction is (3S)-3-hydroxybutanoyl-CoA = (3R)-3-hydroxybutanoyl-CoA. It functions in the pathway lipid metabolism; fatty acid beta-oxidation. Catalyzes the formation of a hydroxyacyl-CoA by addition of water on enoyl-CoA. Also exhibits 3-hydroxyacyl-CoA epimerase and 3-hydroxyacyl-CoA dehydrogenase activities. This Shewanella baltica (strain OS155 / ATCC BAA-1091) protein is Fatty acid oxidation complex subunit alpha.